We begin with the raw amino-acid sequence, 139 residues long: MPRGVYLGFDFGYKRIGVAVGQRLTCSASPLSTIEAKAGIPDWNTIQKVITQWNPQALIVGLPTCIDDRELYTTSAARHFAKQLHKRFSLPVHLVDERLSTVEARGYLFEQGGYRQIKKAEVDSIAACVILEQWLQQSE.

Belongs to the YqgF nuclease family.

The protein resides in the cytoplasm. Its function is as follows. Could be a nuclease involved in processing of the 5'-end of pre-16S rRNA. This is Putative pre-16S rRNA nuclease from Legionella pneumophila (strain Paris).